Consider the following 174-residue polypeptide: Keratin-associated protein 1-5 (174 aa).

The 15 X 5 AA repeats of C-C-[QEPVRC]-[TPIVLE]-[SRHVP] stretch occupies residues 3 to 172; the sequence is CCQTSFCGYP…CCRPVCCCEP (170 aa).

This sequence belongs to the KRTAP type 1 family. As to quaternary structure, interacts with hair keratins. Expressed in the middle/upper portions of the hair cortex, in the region termed the keratogenous zone.

In terms of biological role, in the hair cortex, hair keratin intermediate filaments are embedded in an interfilamentous matrix, consisting of hair keratin-associated proteins (KRTAP), which are essential for the formation of a rigid and resistant hair shaft through their extensive disulfide bond cross-linking with abundant cysteine residues of hair keratins. The matrix proteins include the high-sulfur and high-glycine-tyrosine keratins. This is Keratin-associated protein 1-5 (KRTAP1-5) from Homo sapiens (Human).